The following is a 573-amino-acid chain: NADP-dependent malic enzyme, chloroplastic (573 aa).

Tyrosine 123 (proton donor) is an active-site residue. Arginine 176 contacts NAD(+). Lysine 194 (proton acceptor) is an active-site residue. A divalent metal cation-binding residues include glutamate 265, aspartate 266, and aspartate 289. An NAD(+)-binding site is contributed by aspartate 289. Residue 318-334 participates in NADP(+) binding; the sequence is LFLGAGEAGTGIAELIA. Asparagine 430 provides a ligand contact to NAD(+).

The protein belongs to the malic enzymes family. In terms of assembly, homotetramer. Mg(2+) is required as a cofactor. Mn(2+) serves as cofactor.

It localises to the plastid. It is found in the chloroplast. The catalysed reaction is (S)-malate + NADP(+) = pyruvate + CO2 + NADPH. The enzyme catalyses oxaloacetate + H(+) = pyruvate + CO2. The protein operates within photosynthesis; C4 acid pathway. Functionally, the chloroplastic ME isoform decarboxylates malate shuttled from neighboring mesophyll cells. The CO(2) released is then refixed by ribulose-bisphosphate carboxylase. This pathway eliminates the photorespiratory loss of CO(2) that occurs in most plants. The chain is NADP-dependent malic enzyme, chloroplastic from Solanum lycopersicum (Tomato).